The primary structure comprises 48 residues: Glycine-rich RNA-binding protein 2 (48 aa).

The sequence is that of Glycine-rich RNA-binding protein 2 from Populus euphratica (Euphrates poplar).